Reading from the N-terminus, the 308-residue chain is Olfactory receptor 4E2 (308 aa).

At 1-24 (MGALNQTRVTEFIFLGLTDNWVLE) the chain is on the extracellular side. Residue Asn-5 is glycosylated (N-linked (GlcNAc...) asparagine). The chain crosses the membrane as a helical span at residues 25–45 (ILFFVPFTVTYMLTLLGNFLI). The Cytoplasmic portion of the chain corresponds to 46–57 (VVTIVFTPRLHN). A helical membrane pass occupies residues 58–78 (PMYFFLSNLSFIDICHSSVTV). Residues 79-97 (PKMLEGLLLERKTISFDNC) lie on the Extracellular side of the membrane. Cys-97 and Cys-179 are disulfide-bonded. Residues 98–118 (IAQLFFLHLFACSEIFLLTIM) traverse the membrane as a helical segment. 2 residues coordinate Cu cation: His-105 and Cys-109. Residues 119-143 (AYDRYVAICIPLHYSNVMNMKVCVQ) are Cytoplasmic-facing. Residues 144–164 (LVFALWLGGTIHSLVQTFLTI) form a helical membrane-spanning segment. At 165-204 (RLPYCGPNIIDSYFCDVPPVIKLACTDTYLTGILIVSNSG) the chain is on the extracellular side. Residues 205–225 (TISLVCFLALVTSYTVILFSL) form a helical membrane-spanning segment. Over 226 to 236 (RKQSAEGRRKA) the chain is Cytoplasmic. The helical transmembrane segment at 237–257 (LSTCSAHFMVVALFFGPCIFL) threads the bilayer. Residues 258-268 (YTRPDSSFSID) lie on the Extracellular side of the membrane. Arg-260 serves as a coordination point for Cu cation. The chain crosses the membrane as a helical span at residues 269 to 289 (KVVSVFYTVVTPLLNPLIYTL). The Cytoplasmic segment spans residues 290–308 (RNEEVKTAMKHLRQRRICS).

The protein belongs to the G-protein coupled receptor 1 family. In terms of tissue distribution, expressed in olfactory epithelium, specifically in the olfactory sensory neurons of the septal organ.

It is found in the cell membrane. Its activity is regulated as follows. Copper binding enhances receptor activity in response to odorant binding. Functionally, olfactory receptor that is activated by the binding of organosulfur odorants with thioether groups such as (methylthio)methanethiol (MTMT) and bis(methylthiomethyl) disulfide. Also binds odorants cis-cyclooctene and tert-butyl mercaptan. The activity of this receptor is mediated by G proteins which activate adenylyl cyclase (Potential). The polypeptide is Olfactory receptor 4E2 (Mus musculus (Mouse)).